The chain runs to 97 residues: Small ribosomal subunit protein bS20c (97 aa).

Residues 1–15 are compositionally biased toward polar residues; the sequence is MSKNVSAIKKNQVSL. The disordered stretch occupies residues 1–20; that stretch reads MSKNVSAIKKNQVSLRNKRK.

This sequence belongs to the bacterial ribosomal protein bS20 family.

Its subcellular location is the plastid. It is found in the chloroplast. Binds directly to 16S ribosomal RNA. The chain is Small ribosomal subunit protein bS20c from Gracilaria tenuistipitata var. liui (Red alga).